Consider the following 172-residue polypeptide: Ribosome maturation factor RimM (172 aa).

In terms of domain architecture, PRC barrel spans 96–168 (DGEFYYHEII…RVDVEIPEGL (73 aa)).

This sequence belongs to the RimM family. As to quaternary structure, binds ribosomal protein uS19.

It localises to the cytoplasm. Its function is as follows. An accessory protein needed during the final step in the assembly of 30S ribosomal subunit, possibly for assembly of the head region. Essential for efficient processing of 16S rRNA. May be needed both before and after RbfA during the maturation of 16S rRNA. It has affinity for free ribosomal 30S subunits but not for 70S ribosomes. This is Ribosome maturation factor RimM from Streptococcus sanguinis (strain SK36).